The primary structure comprises 1549 residues: FERM and PDZ domain-containing protein 1 (1549 aa).

The region spanning 57–135 (TVTLDKDVLL…ALSITVVRCT (79 aa)) is the PDZ domain. The FERM domain occupies 181–496 (NVLKVYLENG…GYYRLFVDPA (316 aa)). Disordered stretches follow at residues 554–618 (AREE…DDLD), 717–738 (SHLS…PPQW), 775–834 (YDAA…YAKS), 913–1046 (STNP…RSEI), 1097–1174 (SLDS…EAQE), 1231–1257 (LSPC…DDSP), and 1321–1347 (PETE…AGSQ). Over residues 717–730 (SHLSDSGSESTASR) the composition is skewed to polar residues. An important for interaction with GPSM2 region spans residues 924–931 (EPETMETK). Residues 950 to 961 (PSNTENPVTTDG) are compositionally biased toward polar residues. The span at 962–980 (SSASIPHSPHHSNPGSSSP) shows a compositional bias: low complexity. Residues 1117 to 1130 (SGKDLGDSKGDRLD) are compositionally biased toward basic and acidic residues.

As to quaternary structure, interacts with GPSM1. Interacts with GPSM2.

It localises to the cytoplasm. Its subcellular location is the cytosol. The protein localises to the cell membrane. Stabilizes membrane-bound GPSM1, and thereby promotes its interaction with GNAI1. The chain is FERM and PDZ domain-containing protein 1 (Frmpd1) from Mus musculus (Mouse).